Reading from the N-terminus, the 202-residue chain is FMN-dependent NADH:quinone oxidoreductase (202 aa).

FMN is bound by residues Ser10 and 95–98 (MYNF).

Belongs to the azoreductase type 1 family. As to quaternary structure, homodimer. Requires FMN as cofactor.

It carries out the reaction 2 a quinone + NADH + H(+) = 2 a 1,4-benzosemiquinone + NAD(+). It catalyses the reaction N,N-dimethyl-1,4-phenylenediamine + anthranilate + 2 NAD(+) = 2-(4-dimethylaminophenyl)diazenylbenzoate + 2 NADH + 2 H(+). In terms of biological role, quinone reductase that provides resistance to thiol-specific stress caused by electrophilic quinones. Functionally, also exhibits azoreductase activity. Catalyzes the reductive cleavage of the azo bond in aromatic azo compounds to the corresponding amines. The protein is FMN-dependent NADH:quinone oxidoreductase of Pseudoalteromonas atlantica (strain T6c / ATCC BAA-1087).